Reading from the N-terminus, the 299-residue chain is Protease HtpX homolog (299 aa).

2 consecutive transmembrane segments (helical) span residues 15-35 (ILLL…GYLF) and 39-59 (GLGG…SMIF). Zn(2+) is bound at residue His143. Residue Glu144 is part of the active site. His147 contacts Zn(2+). 2 helical membrane-spanning segments follow: residues 158-178 (IAVA…RMMW) and 198-218 (IIML…ATLV). Glu227 lines the Zn(2+) pocket.

It belongs to the peptidase M48B family. Zn(2+) is required as a cofactor.

It localises to the cell membrane. The chain is Protease HtpX homolog from Streptococcus pneumoniae (strain P1031).